We begin with the raw amino-acid sequence, 283 residues long: Formamidopyrimidine-DNA glycosylase (283 aa).

Proline 2 functions as the Schiff-base intermediate with DNA in the catalytic mechanism. Glutamate 3 acts as the Proton donor in catalysis. The active-site Proton donor; for beta-elimination activity is lysine 58. 3 residues coordinate DNA: histidine 100, arginine 119, and arginine 162. An FPG-type zinc finger spans residues 247–283 (DVYGREGAPCKGEGCTGQIKRIVQSGRSSFYCAQCQR). The active-site Proton donor; for delta-elimination activity is arginine 273.

The protein belongs to the FPG family. In terms of assembly, monomer. The cofactor is Zn(2+).

The enzyme catalyses Hydrolysis of DNA containing ring-opened 7-methylguanine residues, releasing 2,6-diamino-4-hydroxy-5-(N-methyl)formamidopyrimidine.. The catalysed reaction is 2'-deoxyribonucleotide-(2'-deoxyribose 5'-phosphate)-2'-deoxyribonucleotide-DNA = a 3'-end 2'-deoxyribonucleotide-(2,3-dehydro-2,3-deoxyribose 5'-phosphate)-DNA + a 5'-end 5'-phospho-2'-deoxyribonucleoside-DNA + H(+). Functionally, involved in base excision repair of DNA damaged by oxidation or by mutagenic agents. Acts as a DNA glycosylase that recognizes and removes damaged bases. Has a preference for oxidized purines, such as 7,8-dihydro-8-oxoguanine (8-oxoG). Has AP (apurinic/apyrimidinic) lyase activity and introduces nicks in the DNA strand. Cleaves the DNA backbone by beta-delta elimination to generate a single-strand break at the site of the removed base with both 3'- and 5'-phosphates. This chain is Formamidopyrimidine-DNA glycosylase, found in Roseobacter denitrificans (strain ATCC 33942 / OCh 114) (Erythrobacter sp. (strain OCh 114)).